We begin with the raw amino-acid sequence, 141 residues long: Large ribosomal subunit protein uL14 (141 aa).

This sequence belongs to the universal ribosomal protein uL14 family.

The polypeptide is Large ribosomal subunit protein uL14 (RPL23) (Tetrahymena thermophila (strain SB210)).